A 255-amino-acid chain; its full sequence is Testis-specific H1 histone (255 aa).

A disordered region spans residues 1-54 (MEQALTGEAQSRWPRRGGSGAMAEAPGPSGESRGHSATQLPAEKTVGGPSRGCS). Residue Ser56 is modified to Phosphoserine. Over residues 124–134 (KVPKPRRKPGR) the composition is skewed to basic residues. Residues 124–255 (KVPKPRRKPG…PKKPAQRTIQ (132 aa)) are disordered. Over residues 142–152 (RAPWRTPAAPR) the composition is skewed to low complexity. Composition is skewed to basic residues over residues 153–166 (SSRRRRQPLRKAAR) and 174–194 (RNARAKAKANARARRTRRARP). 2 stretches are compositionally biased toward basic and acidic residues: residues 195-230 (RAKEPPCARAKEEAGATAADEGRGQAVKEDTTPRSG) and 238-248 (KPREEKQEPKK).

Belongs to the histone H1/H5 family. In terms of tissue distribution, testis-specific.

Its subcellular location is the nucleus. It is found in the chromosome. Functionally, essential for normal spermatogenesis and male fertility. Required for proper cell restructuring and DNA condensation during the elongation phase of spermiogenesis. Involved in the histone-protamine transition of sperm chromatin and the subsequent production of functional sperm. Binds both double-stranded and single-stranded DNA, ATP and protamine-1. The sequence is that of Testis-specific H1 histone from Homo sapiens (Human).